A 346-amino-acid polypeptide reads, in one-letter code: Probable dual-specificity RNA methyltransferase RlmN (346 aa).

The Proton acceptor role is filled by Glu-76. The Radical SAM core domain maps to 97–329; it reads SYDRATICVS…TFIRKPRGRD (233 aa). Cys-104 and Cys-334 form a disulfide bridge. Cys-111, Cys-115, and Cys-118 together coordinate [4Fe-4S] cluster. Residues 162-163, Ser-192, 215-217, and Asn-291 contribute to the S-adenosyl-L-methionine site; these read GE and SLN. Cys-334 acts as the S-methylcysteine intermediate in catalysis.

It belongs to the radical SAM superfamily. RlmN family. It depends on [4Fe-4S] cluster as a cofactor.

It is found in the cytoplasm. It carries out the reaction adenosine(2503) in 23S rRNA + 2 reduced [2Fe-2S]-[ferredoxin] + 2 S-adenosyl-L-methionine = 2-methyladenosine(2503) in 23S rRNA + 5'-deoxyadenosine + L-methionine + 2 oxidized [2Fe-2S]-[ferredoxin] + S-adenosyl-L-homocysteine. It catalyses the reaction adenosine(37) in tRNA + 2 reduced [2Fe-2S]-[ferredoxin] + 2 S-adenosyl-L-methionine = 2-methyladenosine(37) in tRNA + 5'-deoxyadenosine + L-methionine + 2 oxidized [2Fe-2S]-[ferredoxin] + S-adenosyl-L-homocysteine. Functionally, specifically methylates position 2 of adenine 2503 in 23S rRNA and position 2 of adenine 37 in tRNAs. The polypeptide is Probable dual-specificity RNA methyltransferase RlmN (Koribacter versatilis (strain Ellin345)).